The following is a 151-amino-acid chain: Acidic phospholipase A2 3 (151 aa).

A signal peptide spans 1-27 (MYPAHLLVLLAVCVSLLGAASIPARPL). Intrachain disulfides connect Cys-38–Cys-104, Cys-54–Cys-151, Cys-56–Cys-72, Cys-71–Cys-132, Cys-78–Cys-125, Cys-88–Cys-118, and Cys-111–Cys-123. Residues Tyr-55, Gly-57, and Gly-59 each coordinate Ca(2+). Residue His-75 is part of the active site. Position 76 (Asp-76) interacts with Ca(2+). The active site involves Asp-126.

This sequence belongs to the phospholipase A2 family. Group I subfamily. D49 sub-subfamily. Ca(2+) serves as cofactor. As to expression, expressed by the venom gland.

It localises to the secreted. The enzyme catalyses a 1,2-diacyl-sn-glycero-3-phosphocholine + H2O = a 1-acyl-sn-glycero-3-phosphocholine + a fatty acid + H(+). In terms of biological role, PLA2 catalyzes the calcium-dependent hydrolysis of the 2-acyl groups in 3-sn-phosphoglycerides. In Tropidechis carinatus (Australian rough-scaled snake), this protein is Acidic phospholipase A2 3.